Consider the following 142-residue polypeptide: Neuritin (142 aa).

A signal peptide spans 1-27 (MGLKLNGRYISLILAVQIAYLVQAVRA). The GPI-anchor amidated glycine moiety is linked to residue glycine 116. The propeptide at 117 to 142 (AAGSLLPALSVLLVSLSAALATWFSF) is removed in mature form.

It belongs to the neuritin family. In terms of assembly, component of the outer core of AMPAR complex. AMPAR complex consists of an inner core made of 4 pore-forming GluA/GRIA proteins (GRIA1, GRIA2, GRIA3 and GRIA4) and 4 major auxiliary subunits arranged in a twofold symmetry. One of the two pairs of distinct binding sites is occupied either by CNIH2, CNIH3 or CACNG2, CACNG3. The other harbors CACNG2, CACNG3, CACNG4, CACNG8 or GSG1L. This inner core of AMPAR complex is complemented by outer core constituents binding directly to the GluA/GRIA proteins at sites distinct from the interaction sites of the inner core constituents. Outer core constituents include at least PRRT1, PRRT2, CKAMP44/SHISA9, FRRS1L and NRN1. The proteins of the inner and outer core serve as a platform for other, more peripherally associated AMPAR constituents. Alone or in combination, these auxiliary subunits control the gating and pharmacology of the AMPAR complex and profoundly impact their biogenesis and protein processing. Expressed in the brain (at protein level).

It is found in the cell membrane. The protein resides in the synapse. Its function is as follows. Promotes neurite outgrowth and especially branching of neuritic processes in primary hippocampal and cortical cells. The sequence is that of Neuritin (Nrn1) from Mus musculus (Mouse).